We begin with the raw amino-acid sequence, 1077 residues long: Mitogen-activated protein kinase kinase kinase 9 (1077 aa).

Residues 1-40 (MESSRSLLGCLASATAAPPGDDATGAGAEEEEDEEEAAAE) are disordered. Over residues 14–27 (ATAAPPGDDATGAG) the composition is skewed to low complexity. Residues 28–38 (AEEEEDEEEAA) are compositionally biased toward acidic residues. The 65-residue stretch at 45-109 (AALPYWTAVF…PSNYVTPRSA (65 aa)) folds into the SH3 domain. The 269-residue stretch at 137–405 (LTLEEIIGIG…LTTIEESGFF (269 aa)) folds into the Protein kinase domain. Residues 143 to 151 (IGIGGFGKV) and Lys164 each bind ATP. The active-site Proton acceptor is Asp261. Residues Thr297 and Thr298 each carry the phosphothreonine; by autocatalysis modification. A Phosphoserine; by autocatalysis modification is found at Ser301. A Phosphothreonine; by autocatalysis modification is found at Thr305. Leucine-zipper regions lie at residues 423 to 444 (IQEMFDQLRAKEKELRTWEEEL) and 458 to 479 (LRRREQELAEREIDILERELNI). Over residues 491 to 503 (VKKRKGKFRKSRL) the composition is skewed to basic residues. Disordered regions lie at residues 491–511 (VKKRKGKFRKSRLKLKDGNRI), 526–606 (SPTM…TSGD), 646–713 (EDED…KRGG), 748–790 (LPPE…KKEE), 860–971 (RDPN…PRPS), and 986–1011 (SHARSASPANSSSTETPSNLDSCFAS). Residue Ser526 is modified to Phosphoserine. Composition is skewed to polar residues over residues 559-568 (PGESSKTWGR) and 693-709 (PVNSATSTPQLTPTNSL). The span at 755-767 (PPAREEKKRREGL) shows a compositional bias: basic and acidic residues. Residues 863–880 (NQSLTPTHVTLTAPTQPS) are compositionally biased toward polar residues. Positions 901-915 (GSRSPSSNGMSPSPG) are enriched in low complexity. The segment covering 987–1011 (HARSASPANSSSTETPSNLDSCFAS) has biased composition (polar residues).

This sequence belongs to the protein kinase superfamily. STE Ser/Thr protein kinase family. MAP kinase kinase kinase subfamily. As to quaternary structure, homodimer. It depends on Mg(2+) as a cofactor. In terms of processing, autophosphorylation on serine and threonine residues within the activation loop plays a role in enzyme activation. Thr-305 is likely to be the main autophosphorylation site. Autophosphorylation also occurs on Thr-297 and Ser-301. As to expression, expressed in cochlea and utricle.

The enzyme catalyses L-seryl-[protein] + ATP = O-phospho-L-seryl-[protein] + ADP + H(+). It catalyses the reaction L-threonyl-[protein] + ATP = O-phospho-L-threonyl-[protein] + ADP + H(+). Its activity is regulated as follows. Homodimerization via the leucine zipper domains is required for autophosphorylation of multiple sites in the activation loop and subsequent activation. Autophosphorylation at Thr-305 is the key step in activation of MAP3K9/MLK1 and is required for full phosphorylation. Autophosphorylation at Thr-297 and Ser-301 have been shown to be of secondary importance in the activation of MAP3K9/MLK1. Functionally, serine/threonine kinase which acts as an essential component of the MAP kinase signal transduction pathway. Plays an important role in the cascades of cellular responses evoked by changes in the environment. Once activated, acts as an upstream activator of the MKK/JNK signal transduction cascade through the phosphorylation of MAP2K4/MKK4 and MAP2K7/MKK7 which in turn activate the JNKs. The MKK/JNK signaling pathway regulates stress response via activator protein-1 (JUN) and GATA4 transcription factors. Also plays a role in mitochondrial death signaling pathway, including the release cytochrome c, leading to apoptosis. This is Mitogen-activated protein kinase kinase kinase 9 (Map3k9) from Mus musculus (Mouse).